Consider the following 207-residue polypeptide: Guanylate kinase (207 aa).

In terms of domain architecture, Guanylate kinase-like spans 4–184 (GILFIISAPS…AVNDLITIIT (181 aa)). Residue 11-18 (APSGTGKS) participates in ATP binding.

It belongs to the guanylate kinase family.

It localises to the cytoplasm. It catalyses the reaction GMP + ATP = GDP + ADP. Essential for recycling GMP and indirectly, cGMP. This is Guanylate kinase (gmk) from Buchnera aphidicola subsp. Acyrthosiphon pisum (strain APS) (Acyrthosiphon pisum symbiotic bacterium).